A 228-amino-acid chain; its full sequence is Small ribosomal subunit protein uS3 (228 aa).

The KH type-2 domain occupies 39–107; sequence IRKELNEKLK…PVNINIEEIK (69 aa).

Belongs to the universal ribosomal protein uS3 family. Part of the 30S ribosomal subunit. Forms a tight complex with proteins S10 and S14.

In terms of biological role, binds the lower part of the 30S subunit head. Binds mRNA in the 70S ribosome, positioning it for translation. The chain is Small ribosomal subunit protein uS3 from Hydrogenovibrio crunogenus (strain DSM 25203 / XCL-2) (Thiomicrospira crunogena).